Here is a 477-residue protein sequence, read N- to C-terminus: Transposase for insertion sequence element IS231F (477 aa).

This sequence belongs to the transposase 11 family.

Functionally, involved in the transposition of the insertion sequence. This is Transposase for insertion sequence element IS231F from Bacillus thuringiensis subsp. israelensis.